Here is a 377-residue protein sequence, read N- to C-terminus: MPFGCVTLGDKKDYNHPTEVSDRYDLGQLIKTEEFCEVFRAKEKSSGKLYTCKRFLKRDGRKVRKAAKNEINILKMVKHHNILQLVDVFETRKEYFIFMELASGREVFDWILDQGYYSEKDTSNVIRQVLEAVAYLHSLCVVHRNLKLENLLYFNRMKNSKIVISDFHLAKVETNSLIKEPCGTPEYLAPEVVARQRYGRPVDCWAIGVIMYILLSGNPPFYDELEEEDYESHDKNLFRKILHGDYEFDSPYWDDISPAAKDLVTRLMEVEQDQRVTAADAISHEWISGNAASDKNIKDGVCAQIEKNFAKAKWKKAVRVTTMMKRLRAPEQTDPGTPSPSKDSDKTPSMATPAPSPANTPAEGAPSLPCPSPDTTG.

Positions 24–287 (YDLGQLIKTE…AADAISHEWI (264 aa)) constitute a Protein kinase domain. A disordered region spans residues 324–377 (MKRLRAPEQTDPGTPSPSKDSDKTPSMATPAPSPANTPAEGAPSLPCPSPDTTG). Residues 347-362 (TPSMATPAPSPANTPA) are compositionally biased toward low complexity. A compositionally biased stretch (pro residues) spans 368 to 377 (LPCPSPDTTG).

This sequence belongs to the protein kinase superfamily. CAMK Ser/Thr protein kinase family. As to quaternary structure, interacts with calmodulin, in the presence of calcium. Ca(2+) is required as a cofactor.

It is found in the cytoplasmic vesicle membrane. Functionally, does not appear to have detectable kinase activity. In Xenopus laevis (African clawed frog), this protein is CaM kinase-like vesicle-associated protein (camkv).